Here is a 90-residue protein sequence, read N- to C-terminus: MKTAIFTVVLALAVFAVLSFGWEANEKALSEEFTELIHEKEAASETEARECRYFWGECHDHMPCCDWLVCRYKWSITYNICVWNRTFPEK.

The first 19 residues, 1–19, serve as a signal peptide directing secretion; sequence MKTAIFTVVLALAVFAVLS. Positions 20–50 are excised as a propeptide; sequence FGWEANEKALSEEFTELIHEKEAASETEARE. Intrachain disulfides connect cysteine 51–cysteine 65, cysteine 58–cysteine 70, and cysteine 64–cysteine 81.

This sequence belongs to the neurotoxin 10 (Hwtx-1) family. 13 (Hntx-13) subfamily. In terms of tissue distribution, expressed by the venom gland.

The protein resides in the secreted. Ion channel inhibitor. In Cyriopagopus hainanus (Chinese bird spider), this protein is U7-theraphotoxin-Hhn1h.